The following is a 232-amino-acid chain: Cysteine proteinase inhibitor 7 (232 aa).

The N-terminal stretch at 1–29 (MDMRRASMCMMLICVSLVLLSGFGQFVIC) is a signal peptide. 2 consecutive Cystatin domains span residues 46–135 (GGFS…KNII) and 152–214 (FDWR…ERGN). The Secondary area of contact signature appears at 91-95 (QVVAG). At S181 the chain carries Phosphoserine.

This sequence belongs to the cystatin family. Phytocystatin subfamily.

It is found in the secreted. Its function is as follows. Specific inhibitor of cysteine proteinases. Probably involved in the regulation of endogenous processes and in defense against pests and pathogens. This chain is Cysteine proteinase inhibitor 7 (CYS7), found in Arabidopsis thaliana (Mouse-ear cress).